A 444-amino-acid chain; its full sequence is MAASTPIIQSVRAIPVAGHDSMLLNLSGAHAPYFTRNLLVIEDNSGNIGVGEIPGGEKILATLNDAKSLILGQPIGEYKNLLKKIHQTFADRDSGGRGNQTFDLRTTVHVVTAYESALLDLLGKHLNVNVASLLGDGQQRDEVEVLGYLFFIGDRKQTSLDYATSTHLNHDWYQVRHEKALTPEAIQRLAEASYDRYGFKDFKLKGGVLHGEQEAEAVTAIARRFPDARVTLDPNGAWYLDEAIGLGKHLKGVLAYAEDPCGAEQGYSSREIMAEFKRATGLPTATNMIATDWREMSHSIQLQAVDIPLADPHFWTLEGSVRVSQLCNMYNLTWGSHSNNHFDVSLAMFTHVAAAAVGNVTAIDTHWIWQEGTDHLTKQPLEIKGGKIQVPSVPGLGVELDWDNINRAHELYKAKGLGARNDADAMQFMVPNWKFDHKKPCLVR.

His30, Thr101, Tyr148, and Lys203 together coordinate substrate. Lys205 serves as the catalytic Proton acceptor. Mg(2+) is bound by residues Asp233, Glu264, and Asn287. A substrate-binding site is contributed by Asp233–Asn235. Substrate-binding positions include Asn287, His337–Asn339, His366, and Arg420. Residue His337 is the Proton acceptor of the active site.

It belongs to the mandelate racemase/muconate lactonizing enzyme family. GlucD subfamily. It depends on Mg(2+) as a cofactor.

It catalyses the reaction D-glucarate = 5-dehydro-4-deoxy-D-glucarate + H2O. It functions in the pathway carbohydrate acid metabolism; D-glucarate degradation; 2,5-dioxopentanoate from D-glucarate: step 1/2. In terms of biological role, catalyzes the dehydration of glucarate to 5-keto-4-deoxy-D-glucarate (5-kdGluc). This is Glucarate dehydratase (gudD) from Acinetobacter baylyi (strain ATCC 33305 / BD413 / ADP1).